The sequence spans 458 residues: Ammonium transporter Rh type B (458 aa).

Over 1-13 the chain is Cytoplasmic; sequence MAKSPRRVAGRRL. A helical membrane pass occupies residues 14–34; that stretch reads LLPLLCLFFQGATAILFAIFV. Over 35–61 the chain is Extracellular; that stretch reads RYDQQTDAALWHGGNHSNADNEFYFRY. An N-linked (GlcNAc...) asparagine glycan is attached at Asn49. The chain crosses the membrane as a helical span at residues 62 to 82; the sequence is PSFQDVHAMVFVGFGFLMVFL. Over 83–86 the chain is Cytoplasmic; it reads QRYG. Residues 87 to 107 form a helical membrane-spanning segment; it reads YSSLGFTFLLGAFALQWATLV. Topologically, residues 108-124 are extracellular; that stretch reads QGFLHSFHGGHIHVGME. The chain crosses the membrane as a helical span at residues 125 to 145; it reads SLINADFCAGAVLISFGAVLG. The Cytoplasmic portion of the chain corresponds to 146 to 149; it reads KTGP. A helical membrane pass occupies residues 150–170; sequence AQLLLMALLEVALFGLNEFVL. Over 171-178 the chain is Extracellular; that stretch reads LCLLGVRD. Residues 179–201 form a helical membrane-spanning segment; that stretch reads AGGSMTIHTFGAYFGLVLSRVLY. Residues 202–219 are Cytoplasmic-facing; sequence RPHLEKSQHRQGSVYHSD. The chain crosses the membrane as a helical span at residues 220-240; the sequence is LFAMIGTIFLWIFWPSFNSAL. The Extracellular segment spans residues 241–251; that stretch reads TSRGDGQPRTA. The chain crosses the membrane as a helical span at residues 252 to 272; the sequence is LNTYYSLTASTLSTFALSALV. Residues 273-282 are Cytoplasmic-facing; it reads GKDGRLDMVH. Residues 283 to 303 form a helical membrane-spanning segment; the sequence is VQNAALAGGVVVGTASEMMLT. Position 304 (Pro304) is a topological domain, extracellular. A helical transmembrane segment spans residues 305–325; that stretch reads FGALAAGCLAGAISTLGYKFF. Residues 326–346 are Cytoplasmic-facing; the sequence is TPILESKLKIQDTCGVHNLHG. The chain crosses the membrane as a helical span at residues 347-367; it reads MPGVLGALLGALMTGLTTHEA. Topologically, residues 368–393 are extracellular; the sequence is YGDGLQSVFPLIAEGQRSATSQAIYQ. A helical transmembrane segment spans residues 394-414; sequence LFGLSVTLLFASAGGVLGGLL. Over 415 to 458 the chain is Cytoplasmic; the sequence is LKLPFLDAPPDSQCYEDQMCWEVPGEHGYEAQEALRVEEPDTEA. Positions 416-424 are interaction with ANK3; that stretch reads KLPFLDAPP. Positions 429–432 match the Basolateral sorting signal motif; the sequence is YEDQ.

This sequence belongs to the ammonium transporter (TC 2.A.49) family. Rh subfamily. Interacts (via C-terminus) with ANK2 and ANK3; required for targeting to the basolateral membrane. In terms of processing, N-glycosylated.

Its subcellular location is the cell membrane. It localises to the basolateral cell membrane. It carries out the reaction NH4(+)(in) = NH4(+)(out). The enzyme catalyses methylamine(out) = methylamine(in). It catalyses the reaction CO2(out) = CO2(in). Functionally, ammonium transporter involved in the maintenance of acid-base homeostasis. Transports ammonium and its related derivative methylammonium across the basolateral plasma membrane of epithelial cells likely contributing to renal transepithelial ammonia transport and ammonia metabolism. May transport either NH4(+) or NH3 ammonia species predominantly mediating an electrogenic NH4(+) transport. May act as a CO2 channel providing for renal acid secretion. This is Ammonium transporter Rh type B (RHBG) from Oryctolagus cuniculus (Rabbit).